The following is a 35-amino-acid chain: uncharacterized protein (35 aa).

Residues 14-34 (LAHLIGIIYLIIILGTLVMLF) traverse the membrane as a helical segment.

It is found in the endoplasmic reticulum membrane. This is an uncharacterized protein from Saccharomyces cerevisiae (strain ATCC 204508 / S288c) (Baker's yeast).